The sequence spans 1196 residues: DNA-directed RNA polymerase subunit beta (1196 aa).

The segment covering 1152 to 1165 (EEEIEMRDLEDEED) has biased composition (acidic residues). Residues 1152 to 1196 (EEEIEMRDLEDEEDAKQADGLALSGDEAPEETASPDVERDAVTKE) are disordered. Basic and acidic residues predominate over residues 1187-1196 (DVERDAVTKE).

The protein belongs to the RNA polymerase beta chain family. In terms of assembly, the RNAP catalytic core consists of 2 alpha, 1 beta, 1 beta' and 1 omega subunit. When a sigma factor is associated with the core the holoenzyme is formed, which can initiate transcription.

It carries out the reaction RNA(n) + a ribonucleoside 5'-triphosphate = RNA(n+1) + diphosphate. DNA-dependent RNA polymerase catalyzes the transcription of DNA into RNA using the four ribonucleoside triphosphates as substrates. This Bacillus velezensis (strain DSM 23117 / BGSC 10A6 / LMG 26770 / FZB42) (Bacillus amyloliquefaciens subsp. plantarum) protein is DNA-directed RNA polymerase subunit beta.